The following is a 127-amino-acid chain: Small ribosomal subunit protein uS13 (127 aa).

Positions 95–118 (GLPVRGQRTHTNARTRKGPKKGLV) are enriched in basic residues. The disordered stretch occupies residues 95-127 (GLPVRGQRTHTNARTRKGPKKGLVRKAAAPAPK).

The protein belongs to the universal ribosomal protein uS13 family. In terms of assembly, part of the 30S ribosomal subunit. Forms a loose heterodimer with protein S19. Forms two bridges to the 50S subunit in the 70S ribosome.

In terms of biological role, located at the top of the head of the 30S subunit, it contacts several helices of the 16S rRNA. In the 70S ribosome it contacts the 23S rRNA (bridge B1a) and protein L5 of the 50S subunit (bridge B1b), connecting the 2 subunits; these bridges are implicated in subunit movement. Contacts the tRNAs in the A and P-sites. In Anaeromyxobacter sp. (strain Fw109-5), this protein is Small ribosomal subunit protein uS13.